The sequence spans 621 residues: Rab proteins geranylgeranyltransferase component A 2 (621 aa).

The disordered stretch occupies residues Val-113–Ala-171. Positions Asp-115–Leu-125 are enriched in polar residues. A compositionally biased stretch (basic and acidic residues) spans Pro-155–Leu-166.

Belongs to the Rab GDI family. Monomer. Heterotrimer composed of RABGGTA, RABGGTB and CHML; within this trimer, RABGGTA and RABGGTB form the catalytic component B, while CHML (component A) mediates Rab protein binding. Interacts with RAB1A, RAB7A and RAB27A, but has much lower affinity for RAB1A, RAB7A and RAB27A than CHM. Interacts with the non-phosphorylated forms of RAB3A, RAB3B, RAB3C, RAB3D, RAB5B, RAB5C, RAB8A, RAB8B, RAB10, RAB12, RAB35, and RAB43.

It localises to the cytoplasm. It is found in the cytosol. Its function is as follows. Substrate-binding subunit (component A) of the Rab geranylgeranyltransferase (GGTase) complex. Binds unprenylated Rab proteins and presents the substrate peptide to the catalytic component B. The component A is thought to be regenerated by transferring its prenylated Rab back to the donor membrane. Less effective than CHM in supporting prenylation of Rab3 family. The polypeptide is Rab proteins geranylgeranyltransferase component A 2 (Chml) (Mus musculus (Mouse)).